A 167-amino-acid polypeptide reads, in one-letter code: Translation initiation factor IF-3 (167 aa).

Belongs to the IF-3 family. As to quaternary structure, monomer.

The protein resides in the cytoplasm. Its function is as follows. IF-3 binds to the 30S ribosomal subunit and shifts the equilibrium between 70S ribosomes and their 50S and 30S subunits in favor of the free subunits, thus enhancing the availability of 30S subunits on which protein synthesis initiation begins. The chain is Translation initiation factor IF-3 from Bacillus cereus (strain ATCC 14579 / DSM 31 / CCUG 7414 / JCM 2152 / NBRC 15305 / NCIMB 9373 / NCTC 2599 / NRRL B-3711).